The sequence spans 195 residues: Early light-induced protein 1, chloroplastic (195 aa).

The transit peptide at 1 to 46 directs the protein to the chloroplast; it reads MATASFNMQSVFAGGLTTRKINTNKLFSAGSFPNLKRNYPVGVRCM. The disordered stretch occupies residues 46–81; the sequence is MAEGGPTNEDSSPAPSTSAAQPLPKSPSPPPPMKPK. The segment covering 56–68 has biased composition (low complexity); it reads SSPAPSTSAAQPL. Positions 69-79 are enriched in pro residues; the sequence is PKSPSPPPPMK. 3 helical membrane passes run 104–124, 131–151, and 175–195; these read LAMV…ENVL, GVSW…VPLF, and FAML…GTLV.

This sequence belongs to the ELIP/psbS family.

It localises to the plastid. Its subcellular location is the chloroplast thylakoid membrane. In terms of biological role, prevents excess accumulation of free chlorophyll by inhibiting the entire chlorophyll biosynthesis pathway (e.g. 5-aminolevulinate synthesis and Mg-protoporphyrin IX chelatase activity), and hence prevent photooxidative stress. Probably involved in the integration of pigments into the mature light-harvesting pigment-protein complexes. Light-harvesting chlorophyll (LHC) a/b-binding protein required to ensure a high rate of chlorophyll accumulation during deetiolation in continuous high light. Involved in seed germination. May fulfill a photoprotective functions. In Arabidopsis thaliana (Mouse-ear cress), this protein is Early light-induced protein 1, chloroplastic.